The following is a 173-amino-acid chain: Crossover junction endodeoxyribonuclease RuvC (173 aa).

Active-site residues include D8, E67, and D139. Mg(2+)-binding residues include D8, E67, and D139.

It belongs to the RuvC family. In terms of assembly, homodimer which binds Holliday junction (HJ) DNA. The HJ becomes 2-fold symmetrical on binding to RuvC with unstacked arms; it has a different conformation from HJ DNA in complex with RuvA. In the full resolvosome a probable DNA-RuvA(4)-RuvB(12)-RuvC(2) complex forms which resolves the HJ. The cofactor is Mg(2+).

It localises to the cytoplasm. The enzyme catalyses Endonucleolytic cleavage at a junction such as a reciprocal single-stranded crossover between two homologous DNA duplexes (Holliday junction).. In terms of biological role, the RuvA-RuvB-RuvC complex processes Holliday junction (HJ) DNA during genetic recombination and DNA repair. Endonuclease that resolves HJ intermediates. Cleaves cruciform DNA by making single-stranded nicks across the HJ at symmetrical positions within the homologous arms, yielding a 5'-phosphate and a 3'-hydroxyl group; requires a central core of homology in the junction. The consensus cleavage sequence is 5'-(A/T)TT(C/G)-3'. Cleavage occurs on the 3'-side of the TT dinucleotide at the point of strand exchange. HJ branch migration catalyzed by RuvA-RuvB allows RuvC to scan DNA until it finds its consensus sequence, where it cleaves and resolves the cruciform DNA. The protein is Crossover junction endodeoxyribonuclease RuvC of Tolumonas auensis (strain DSM 9187 / NBRC 110442 / TA 4).